Here is a 149-residue protein sequence, read N- to C-terminus: Transcriptional regulator MraZ (149 aa).

2 SpoVT-AbrB domains span residues K7 to H54 and A83 to N126.

The protein belongs to the MraZ family. As to quaternary structure, forms oligomers.

It localises to the cytoplasm. It is found in the nucleoid. The sequence is that of Transcriptional regulator MraZ from Rickettsia rickettsii (strain Sheila Smith).